Consider the following 616-residue polypeptide: Putative L-type lectin-domain containing receptor kinase I.10 (616 aa).

The N-terminal stretch at 1-22 is a signal peptide; the sequence is MAWGLFQILMISFFHLIKLSSQ. Over 23 to 288 the chain is Extracellular; it reads QETSFVYETF…RAEHKNLSPL (266 aa). A legume-lectin like region spans residues 24 to 258; the sequence is ETSFVYETFR…YQYVLSWSFS (235 aa). Residues asparagine 56, asparagine 124, asparagine 181, asparagine 204, and asparagine 225 are each glycosylated (N-linked (GlcNAc...) asparagine). Residues 289–309 traverse the membrane as a helical segment; it reads FIDLLGFLAIMGLCTLTGMYF. The Cytoplasmic segment spans residues 310–616; the sequence is FKRGKYAEIT…SAASSATNSP (307 aa). The 274-residue stretch at 343–616 folds into the Protein kinase domain; it reads FHKDGFLGKG…SAASSATNSP (274 aa). Residues 349 to 357 and lysine 371 contribute to the ATP site; that span reads LGKGGFGEV. The active-site Proton acceptor is aspartate 467.

This sequence in the C-terminal section; belongs to the protein kinase superfamily. Ser/Thr protein kinase family. In the N-terminal section; belongs to the leguminous lectin family.

The protein resides in the cell membrane. It carries out the reaction L-seryl-[protein] + ATP = O-phospho-L-seryl-[protein] + ADP + H(+). It catalyses the reaction L-threonyl-[protein] + ATP = O-phospho-L-threonyl-[protein] + ADP + H(+). This Arabidopsis thaliana (Mouse-ear cress) protein is Putative L-type lectin-domain containing receptor kinase I.10 (LECRK110).